The following is a 422-amino-acid chain: Bifunctional enzyme IspD/IspF (422 aa).

Residues Met1–Pro267 are 2-C-methyl-D-erythritol 4-phosphate cytidylyltransferase. A 2-C-methyl-D-erythritol 2,4-cyclodiphosphate synthase region spans residues Leu268–Arg422. Asp274 and His276 together coordinate a divalent metal cation. 4-CDP-2-C-methyl-D-erythritol 2-phosphate-binding positions include Asp274–His276 and His301–Ser302. Residue His309 coordinates a divalent metal cation. 4-CDP-2-C-methyl-D-erythritol 2-phosphate is bound by residues Asp323–Gly325, Phe404, and Arg407.

This sequence in the N-terminal section; belongs to the IspD/TarI cytidylyltransferase family. IspD subfamily. It in the C-terminal section; belongs to the IspF family. A divalent metal cation is required as a cofactor.

It catalyses the reaction 2-C-methyl-D-erythritol 4-phosphate + CTP + H(+) = 4-CDP-2-C-methyl-D-erythritol + diphosphate. It carries out the reaction 4-CDP-2-C-methyl-D-erythritol 2-phosphate = 2-C-methyl-D-erythritol 2,4-cyclic diphosphate + CMP. The protein operates within isoprenoid biosynthesis; isopentenyl diphosphate biosynthesis via DXP pathway; isopentenyl diphosphate from 1-deoxy-D-xylulose 5-phosphate: step 2/6. It functions in the pathway isoprenoid biosynthesis; isopentenyl diphosphate biosynthesis via DXP pathway; isopentenyl diphosphate from 1-deoxy-D-xylulose 5-phosphate: step 4/6. In terms of biological role, bifunctional enzyme that catalyzes the formation of 4-diphosphocytidyl-2-C-methyl-D-erythritol from CTP and 2-C-methyl-D-erythritol 4-phosphate (MEP) (IspD), and catalyzes the conversion of 4-diphosphocytidyl-2-C-methyl-D-erythritol 2-phosphate (CDP-ME2P) to 2-C-methyl-D-erythritol 2,4-cyclodiphosphate (ME-CPP) with a corresponding release of cytidine 5-monophosphate (CMP) (IspF). In Tropheryma whipplei (strain TW08/27) (Whipple's bacillus), this protein is Bifunctional enzyme IspD/IspF.